Reading from the N-terminus, the 288-residue chain is Glycine--tRNA ligase alpha subunit (288 aa).

This sequence belongs to the class-II aminoacyl-tRNA synthetase family. In terms of assembly, tetramer of two alpha and two beta subunits.

Its subcellular location is the cytoplasm. The enzyme catalyses tRNA(Gly) + glycine + ATP = glycyl-tRNA(Gly) + AMP + diphosphate. The sequence is that of Glycine--tRNA ligase alpha subunit from Rickettsia africae (strain ESF-5).